Consider the following 446-residue polypeptide: Tryptophan dimethylallyltransferase (446 aa).

L-tryptophan-binding positions include 83–84 (IL) and Glu-92. Substrate contacts are provided by Arg-103, Lys-189, and Tyr-191. L-tryptophan contacts are provided by Tyr-193 and Arg-246. Substrate contacts are provided by Arg-259, Lys-261, Tyr-263, Gln-345, and Tyr-347.

Belongs to the tryptophan dimethylallyltransferase family. In terms of assembly, homodimer.

The enzyme catalyses L-tryptophan + dimethylallyl diphosphate = 4-(3-methylbut-2-enyl)-L-tryptophan + diphosphate. It functions in the pathway alkaloid biosynthesis; ergot alkaloid biosynthesis. Its function is as follows. Tryptophan dimethylallyltransferase; part of the gene cluster that mediates the biosynthesis of fungal ergot alkaloid. DmaW catalyzes the first step of ergot alkaloid biosynthesis by condensing dimethylallyl diphosphate (DMAP) and tryptophan to form 4-dimethylallyl-L-tryptophan. The second step is catalyzed by the methyltransferase easF that methylates 4-dimethylallyl-L-tryptophan in the presence of S-adenosyl-L-methionine, resulting in the formation of 4-dimethylallyl-L-abrine. The catalase easC and the FAD-dependent oxidoreductase easE then transform 4-dimethylallyl-L-abrine to chanoclavine-I which is further oxidized by easD in the presence of NAD(+), resulting in the formation of chanoclavine-I aldehyde. Chanoclavine-I aldehyde is the precursor of ergoamides and ergopeptines in Clavicipitaceae, and clavine-type alcaloids such as fumiclavine in Trichocomaceae. However, the metabolites downstream of chanoclavine-I aldehyde in Arthrodermataceae have not been identified yet. This is Tryptophan dimethylallyltransferase from Arthroderma otae (strain ATCC MYA-4605 / CBS 113480) (Microsporum canis).